A 429-amino-acid polypeptide reads, in one-letter code: 3-isopropylmalate dehydratase large subunit (429 aa).

[4Fe-4S] cluster is bound by residues Cys303, Cys363, and Cys366.

The protein belongs to the aconitase/IPM isomerase family. LeuC type 2 subfamily. In terms of assembly, heterodimer of LeuC and LeuD. The cofactor is [4Fe-4S] cluster.

It catalyses the reaction (2R,3S)-3-isopropylmalate = (2S)-2-isopropylmalate. It participates in amino-acid biosynthesis; L-leucine biosynthesis; L-leucine from 3-methyl-2-oxobutanoate: step 2/4. Functionally, catalyzes the isomerization between 2-isopropylmalate and 3-isopropylmalate, via the formation of 2-isopropylmaleate. The sequence is that of 3-isopropylmalate dehydratase large subunit from Caldicellulosiruptor bescii (strain ATCC BAA-1888 / DSM 6725 / KCTC 15123 / Z-1320) (Anaerocellum thermophilum).